Consider the following 167-residue polypeptide: Probable chemoreceptor glutamine deamidase CheD (167 aa).

This sequence belongs to the CheD family.

It catalyses the reaction L-glutaminyl-[protein] + H2O = L-glutamyl-[protein] + NH4(+). Its function is as follows. Probably deamidates glutamine residues to glutamate on methyl-accepting chemotaxis receptors (MCPs), playing an important role in chemotaxis. The polypeptide is Probable chemoreceptor glutamine deamidase CheD (Moorella thermoacetica (strain ATCC 39073 / JCM 9320)).